Reading from the N-terminus, the 329-residue chain is Interferon regulatory factor 1 (329 aa).

Residues 5–113 constitute a DNA-binding region (IRF tryptophan pentad repeat); sequence RMRMRPWLEM…SAVRVYRMLP (109 aa). K78 bears the N6-acetyllysine mark. The disordered stretch occupies residues 93–166; sequence EVKDQSRNKG…LPDDHSSYTT (74 aa). Over residues 146–166 the composition is skewed to polar residues; that stretch reads DTFSDGLSSSTLPDDHSSYTT. Residues K276 and K300 each participate in a glycyl lysine isopeptide (Lys-Gly) (interchain with G-Cter in SUMO) cross-link.

This sequence belongs to the IRF family. Monomer. Homodimer. Interacts with EP300. Interacts with MYD88. Interacts with PIAS3. Interacts with SPOP. Post-translationally, phosphorylated by CK2 and this positively regulates its activity. Ubiquitinated in a SPOP-depedent manner. Sumoylation represses the transcriptional activity and displays enhanced resistance to protein degradation. Sumoylated by UBE2I/UBC9 and SUMO1. Inactivates the tumor suppressor activity. Elevated levels in tumor cells. Major site is Lys-276. Sumoylation is enhanced by PIAS3. Desumoylated by SENP1 in tumor cells and appears to compete with ubiquitination on C-terminal sites. In terms of processing, ubiquitinated. Appears to compete with sumoylation on C-terminal sites.

The protein localises to the nucleus. It is found in the cytoplasm. Activated by MYD88. Transcriptional regulator which displays a remarkable functional diversity in the regulation of cellular responses. Regulates transcription of IFN and IFN-inducible genes, host response to viral and bacterial infections, regulation of many genes expressed during hematopoiesis, inflammation, immune responses and cell proliferation and differentiation, regulation of the cell cycle and induction of growth arrest and programmed cell death following DNA damage. Stimulates both innate and acquired immune responses through the activation of specific target genes and can act as a transcriptional activator and repressor regulating target genes by binding to an interferon-stimulated response element (ISRE) in their promoters. Has an essentail role in IFNG-dependent immunity to mycobacteria. Binds to a consensus sequence in gene promoters. Its target genes for transcriptional activation activity are: genes involved in anti-viral response, such as IFN-alpha/beta, RIGI, TNFSF10/TRAIL, ZBP1, OAS1/2, PIAS1/GBP, EIF2AK2/PKR and RSAD2/viperin; antibacterial response, such as GBP2, GBP5, IRGB10 and NOS2/INOS; anti-proliferative response, such as p53/TP53, LOX and CDKN1A; apoptosis, such as BBC3/PUMA, CASP1, CASP7 and CASP8; immune response, such as IL7, IL12A/B and IL15, PTGS2/COX2 and CYBB; DNA damage responses and DNA repair, such as POLQ/POLH; MHC class I expression, such as TAP1, PSMB9/LMP2, PSME1/PA28A, PSME2/PA28B and B2M and MHC class II expression, such as CIITA; metabolic enzymes, such as ACOD1/IRG1. Represses genes involved in anti-proliferative response, such as BIRC5/survivin, CCNB1, CCNE1, CDK1, CDK2 and CDK4 and in immune response, such as FOXP3, IL4, ANXA2 and TLR4. Stimulates p53/TP53-dependent transcription through enhanced recruitment of EP300 leading to increased acetylation of p53/TP53. Plays an important role in immune response directly affecting NK maturation and activity, macrophage production of IL12, Th1 development and maturation of CD8+ T-cells. Also implicated in the differentiation and maturation of dendritic cells and in the suppression of regulatory T (Treg) cells development. Acts as a tumor suppressor and plays a role not only in antagonism of tumor cell growth but also in stimulating an immune response against tumor cells. This Mus musculus (Mouse) protein is Interferon regulatory factor 1 (Irf1).